Here is a 405-residue protein sequence, read N- to C-terminus: Imidazolonepropionase (405 aa).

Fe(3+)-binding residues include His72 and His74. Zn(2+) is bound by residues His72 and His74. Residues Arg81, Tyr144, and His177 each coordinate 4-imidazolone-5-propanoate. An N-formimidoyl-L-glutamate-binding site is contributed by Tyr144. His242 is a Fe(3+) binding site. Position 242 (His242) interacts with Zn(2+). Gln245 lines the 4-imidazolone-5-propanoate pocket. Residue Asp317 participates in Fe(3+) binding. Asp317 is a Zn(2+) binding site. 2 residues coordinate N-formimidoyl-L-glutamate: Asn319 and Gly321. Thr322 is a binding site for 4-imidazolone-5-propanoate.

It belongs to the metallo-dependent hydrolases superfamily. HutI family. Zn(2+) serves as cofactor. It depends on Fe(3+) as a cofactor.

Its subcellular location is the cytoplasm. It carries out the reaction 4-imidazolone-5-propanoate + H2O = N-formimidoyl-L-glutamate. It participates in amino-acid degradation; L-histidine degradation into L-glutamate; N-formimidoyl-L-glutamate from L-histidine: step 3/3. In terms of biological role, catalyzes the hydrolytic cleavage of the carbon-nitrogen bond in imidazolone-5-propanoate to yield N-formimidoyl-L-glutamate. It is the third step in the universal histidine degradation pathway. This Klebsiella pneumoniae subsp. pneumoniae (strain ATCC 700721 / MGH 78578) protein is Imidazolonepropionase.